We begin with the raw amino-acid sequence, 249 residues long: Aspartate/glutamate leucyltransferase (249 aa).

The protein belongs to the R-transferase family. Bpt subfamily.

The protein resides in the cytoplasm. The enzyme catalyses N-terminal L-glutamyl-[protein] + L-leucyl-tRNA(Leu) = N-terminal L-leucyl-L-glutamyl-[protein] + tRNA(Leu) + H(+). It catalyses the reaction N-terminal L-aspartyl-[protein] + L-leucyl-tRNA(Leu) = N-terminal L-leucyl-L-aspartyl-[protein] + tRNA(Leu) + H(+). In terms of biological role, functions in the N-end rule pathway of protein degradation where it conjugates Leu from its aminoacyl-tRNA to the N-termini of proteins containing an N-terminal aspartate or glutamate. The protein is Aspartate/glutamate leucyltransferase of Brucella anthropi (strain ATCC 49188 / DSM 6882 / CCUG 24695 / JCM 21032 / LMG 3331 / NBRC 15819 / NCTC 12168 / Alc 37) (Ochrobactrum anthropi).